A 206-amino-acid polypeptide reads, in one-letter code: Pyrrolidone-carboxylate peptidase (206 aa).

Catalysis depends on residues glutamate 78, cysteine 141, and histidine 165.

It belongs to the peptidase C15 family. Homotetramer.

The protein resides in the cytoplasm. It carries out the reaction Release of an N-terminal pyroglutamyl group from a polypeptide, the second amino acid generally not being Pro.. In terms of biological role, removes 5-oxoproline from various penultimate amino acid residues except L-proline. This is Pyrrolidone-carboxylate peptidase from Thermococcus kodakarensis (strain ATCC BAA-918 / JCM 12380 / KOD1) (Pyrococcus kodakaraensis (strain KOD1)).